Consider the following 315-residue polypeptide: Putative methyltransferase SPBC8D2.16c (315 aa).

Belongs to the class IV-like SAM-binding methyltransferase superfamily.

It localises to the cytoplasm. The protein localises to the nucleus. The protein is Putative methyltransferase SPBC8D2.16c of Schizosaccharomyces pombe (strain 972 / ATCC 24843) (Fission yeast).